We begin with the raw amino-acid sequence, 393 residues long: Na(+)/H(+) antiporter NhaA (393 aa).

12 helical membrane-spanning segments follow: residues 23–43 (AGGITLMAAAALALIVANSPF), 58–78 (LSLAHWINDALMAKFFLLVGL), 96–116 (MLPGIAAAGGVILPAIIFAVL), 126–146 (GWAVPSATDIAFALGVLSLLG), 155–175 (VFLATLAILDDLAAVVIIAIF), 178–198 (AEISMPYLGAAFITAAVLFVM), 201–221 (MGVVKLLPYLISAVILWFFVF), 224–244 (GVHATVAGVVAALMIPLKPAP), 265–285 (VAFIVVPIFGFANAGISFKGL), 298–318 (ILLGLFLGKQFGVFGAAWLAI), 334–354 (LYGVAILCGIGFTMSIFIGLL), and 367–387 (IGVLSGSALSAICGYLLLRAA).

The protein belongs to the NhaA Na(+)/H(+) (TC 2.A.33) antiporter family.

The protein resides in the cell inner membrane. The enzyme catalyses Na(+)(in) + 2 H(+)(out) = Na(+)(out) + 2 H(+)(in). In terms of biological role, na(+)/H(+) antiporter that extrudes sodium in exchange for external protons. This is Na(+)/H(+) antiporter NhaA from Brucella suis (strain ATCC 23445 / NCTC 10510).